The chain runs to 173 residues: VQ motif-containing protein 31 (173 aa).

The short motif at 27-36 (FREIVQRLTG) is the VQ element. At threonine 46 the chain carries Phosphothreonine. Disordered stretches follow at residues 76-105 (EIVK…TSPV) and 143-173 (LHPS…SGKP). The segment covering 86-105 (PTGTTPSSKSGNTNLLTSPV) has biased composition (polar residues). Phosphoserine is present on residues serine 92, serine 103, serine 146, and serine 149. Residues 154 to 165 (TEPELLTLFPLT) are compositionally biased toward low complexity. Residue threonine 165 is modified to Phosphothreonine. Phosphoserine occurs at positions 166 and 170.

Post-translationally, phosphorylated on serine and threonine residues by MPK6.

It is found in the nucleus. May modulate WRKY transcription factor activities. In Arabidopsis thaliana (Mouse-ear cress), this protein is VQ motif-containing protein 31.